A 1055-amino-acid polypeptide reads, in one-letter code: DIS3-like exonuclease 2 (1055 aa).

2 disordered regions span residues 1–109 (MKSA…SSPE) and 229–249 (SAAK…KARQ). Residues 17-32 (HKKKRNRPQKQNRRSK) are compositionally biased toward basic residues. The span at 39-59 (EDAHVEESLDGRDSSRSKAKD) shows a compositional bias: basic and acidic residues. The span at 97 to 108 (PRRSASPLLSSP) shows a compositional bias: low complexity. The Mg(2+) site is built by D488 and D497.

It belongs to the RNR ribonuclease family. DIS3L2 subfamily. Mg(2+) is required as a cofactor. It depends on Mn(2+) as a cofactor. In terms of tissue distribution, widely expressed.

It is found in the cytoplasm. It localises to the P-body. 3'-5'-exoribonuclease that specifically recognizes RNAs polyuridylated at their 3' end and mediates their degradation. Component of an exosome-independent RNA degradation pathway that mediates degradation of cytoplasmic mRNAs that have been deadenylated and subsequently uridylated at their 3'. The chain is DIS3-like exonuclease 2 (SOV) from Arabidopsis thaliana (Mouse-ear cress).